A 257-amino-acid polypeptide reads, in one-letter code: tRNA (guanine-N(7)-)-methyltransferase (257 aa).

Positions 1–42 (MTVVVSDHQNPRPPGDDAAPLGRTGNRDRPPGSFFGRRKGHR) are disordered. 4 residues coordinate S-adenosyl-L-methionine: Glu-84, Glu-109, Asp-136, and Asp-158. The active site involves Asp-158. Lys-162 and Asp-194 together coordinate substrate.

It belongs to the class I-like SAM-binding methyltransferase superfamily. TrmB family.

The catalysed reaction is guanosine(46) in tRNA + S-adenosyl-L-methionine = N(7)-methylguanosine(46) in tRNA + S-adenosyl-L-homocysteine. It functions in the pathway tRNA modification; N(7)-methylguanine-tRNA biosynthesis. Functionally, catalyzes the formation of N(7)-methylguanine at position 46 (m7G46) in tRNA. This is tRNA (guanine-N(7)-)-methyltransferase from Nitrobacter winogradskyi (strain ATCC 25391 / DSM 10237 / CIP 104748 / NCIMB 11846 / Nb-255).